Consider the following 470-residue polypeptide: Light-independent protochlorophyllide reductase subunit N (470 aa).

[4Fe-4S] cluster is bound by residues C22, C47, and C107.

This sequence belongs to the BchN/ChlN family. In terms of assembly, protochlorophyllide reductase is composed of three subunits; ChlL, ChlN and ChlB. Forms a heterotetramer of two ChlB and two ChlN subunits. It depends on [4Fe-4S] cluster as a cofactor.

Its subcellular location is the plastid. It localises to the chloroplast. It catalyses the reaction chlorophyllide a + oxidized 2[4Fe-4S]-[ferredoxin] + 2 ADP + 2 phosphate = protochlorophyllide a + reduced 2[4Fe-4S]-[ferredoxin] + 2 ATP + 2 H2O. The protein operates within porphyrin-containing compound metabolism; chlorophyll biosynthesis (light-independent). Its function is as follows. Component of the dark-operative protochlorophyllide reductase (DPOR) that uses Mg-ATP and reduced ferredoxin to reduce ring D of protochlorophyllide (Pchlide) to form chlorophyllide a (Chlide). This reaction is light-independent. The NB-protein (ChlN-ChlB) is the catalytic component of the complex. The sequence is that of Light-independent protochlorophyllide reductase subunit N from Pinus koraiensis (Korean pine).